We begin with the raw amino-acid sequence, 361 residues long: S-adenosylmethionine decarboxylase proenzyme (361 aa).

Residues glutamate 13 and glutamate 16 contribute to the active site. Serine 73 functions as the Schiff-base intermediate with substrate; via pyruvic acid in the catalytic mechanism. Serine 73 is modified (pyruvic acid (Ser); by autocatalysis). Cysteine 87 serves as the catalytic Proton donor; for catalytic activity. Catalysis depends on proton acceptor; for processing activity residues serine 236 and histidine 249.

Belongs to the eukaryotic AdoMetDC family. Pyruvate serves as cofactor. Is synthesized initially as an inactive proenzyme. Formation of the active enzyme involves a self-maturation process in which the active site pyruvoyl group is generated from an internal serine residue via an autocatalytic post-translational modification. Two non-identical subunits are generated from the proenzyme in this reaction, and the pyruvate is formed at the N-terminus of the alpha chain, which is derived from the carboxyl end of the proenzyme. The post-translation cleavage follows an unusual pathway, termed non-hydrolytic serinolysis, in which the side chain hydroxyl group of the serine supplies its oxygen atom to form the C-terminus of the beta chain, while the remainder of the serine residue undergoes an oxidative deamination to produce ammonia and the pyruvoyl group blocking the N-terminus of the alpha chain.

It carries out the reaction S-adenosyl-L-methionine + H(+) = S-adenosyl 3-(methylsulfanyl)propylamine + CO2. It participates in amine and polyamine biosynthesis; S-adenosylmethioninamine biosynthesis; S-adenosylmethioninamine from S-adenosyl-L-methionine: step 1/1. This Nicotiana tabacum (Common tobacco) protein is S-adenosylmethionine decarboxylase proenzyme (SAMDC).